A 355-amino-acid chain; its full sequence is UDP-N-acetylglucosamine--N-acetylmuramyl-(pentapeptide) pyrophosphoryl-undecaprenol N-acetylglucosamine transferase (355 aa).

UDP-N-acetyl-alpha-D-glucosamine contacts are provided by residues 15–17, Asn127, Arg163, Ser191, Ile244, 263–268, and Gln288; these read TGG and ALTVSE.

The protein belongs to the glycosyltransferase 28 family. MurG subfamily.

The protein resides in the cell inner membrane. It catalyses the reaction di-trans,octa-cis-undecaprenyl diphospho-N-acetyl-alpha-D-muramoyl-L-alanyl-D-glutamyl-meso-2,6-diaminopimeloyl-D-alanyl-D-alanine + UDP-N-acetyl-alpha-D-glucosamine = di-trans,octa-cis-undecaprenyl diphospho-[N-acetyl-alpha-D-glucosaminyl-(1-&gt;4)]-N-acetyl-alpha-D-muramoyl-L-alanyl-D-glutamyl-meso-2,6-diaminopimeloyl-D-alanyl-D-alanine + UDP + H(+). Its pathway is cell wall biogenesis; peptidoglycan biosynthesis. Cell wall formation. Catalyzes the transfer of a GlcNAc subunit on undecaprenyl-pyrophosphoryl-MurNAc-pentapeptide (lipid intermediate I) to form undecaprenyl-pyrophosphoryl-MurNAc-(pentapeptide)GlcNAc (lipid intermediate II). The protein is UDP-N-acetylglucosamine--N-acetylmuramyl-(pentapeptide) pyrophosphoryl-undecaprenol N-acetylglucosamine transferase of Citrobacter koseri (strain ATCC BAA-895 / CDC 4225-83 / SGSC4696).